The chain runs to 430 residues: Glutamyl-tRNA reductase 1 (430 aa).

Substrate is bound by residues 49–52 (TCNR), S109, 114–116 (EGQ), and Q120. The active-site Nucleophile is the C50. 189 to 194 (GAGSMA) lines the NADP(+) pocket.

This sequence belongs to the glutamyl-tRNA reductase family. In terms of assembly, homodimer.

It catalyses the reaction (S)-4-amino-5-oxopentanoate + tRNA(Glu) + NADP(+) = L-glutamyl-tRNA(Glu) + NADPH + H(+). It functions in the pathway porphyrin-containing compound metabolism; protoporphyrin-IX biosynthesis; 5-aminolevulinate from L-glutamyl-tRNA(Glu): step 1/2. Its function is as follows. Catalyzes the NADPH-dependent reduction of glutamyl-tRNA(Glu) to glutamate 1-semialdehyde (GSA). In Nocardioides sp. (strain ATCC BAA-499 / JS614), this protein is Glutamyl-tRNA reductase 1.